We begin with the raw amino-acid sequence, 155 residues long: Ribosome maturation factor RimP (155 aa).

It belongs to the RimP family.

The protein localises to the cytoplasm. Functionally, required for maturation of 30S ribosomal subunits. The polypeptide is Ribosome maturation factor RimP (Gloeothece citriformis (strain PCC 7424) (Cyanothece sp. (strain PCC 7424))).